The chain runs to 583 residues: Laminarase-resistance protein LRE1 (583 aa).

Over residues 1 to 24 (MPNTHTQHVQISEPNPVNTLSTPS) the composition is skewed to polar residues. Disordered stretches follow at residues 1-31 (MPNTHTQHVQISEPNPVNTLSTPSKRGHRHR) and 330-380 (LKDN…HMQH). Composition is skewed to basic and acidic residues over residues 332–342 (DNPRYAKDGYP) and 354–366 (LDSDKRQDFSGES). S393 and S398 each carry phosphoserine. Residues 457-486 (SCTPDGKEEMNRLKSNDSNEYSKSEGQIRT) form a disordered region. A compositionally biased stretch (basic and acidic residues) spans 461-479 (DGKEEMNRLKSNDSNEYSK). S516 and S552 each carry phosphoserine.

Post-translationally, phosphorylated by CDC28/CDK1.

In terms of biological role, overexpression affects chitinase expression, cell separation and budding pattern, and increases trehalose accumulation and heat resistance by inhibiting protein kinase CBK1. Overexpression also suppresses temperature-induced hyperosmosensitivity and sensitivity to cell wall degrading enzymes. Overexpression of both LRE1 and PBN1 confers resistance to laminarinase. This chain is Laminarase-resistance protein LRE1 (LRE1), found in Saccharomyces cerevisiae (strain ATCC 204508 / S288c) (Baker's yeast).